A 245-amino-acid polypeptide reads, in one-letter code: Thiamine phosphate phosphatase-like protein (245 aa).

The active-site Nucleophile is aspartate 9. The Mg(2+) site is built by aspartate 9, aspartate 11, and aspartate 179. Aspartate 11 functions as the Proton donor in the catalytic mechanism.

Belongs to the HAD-like hydrolase superfamily. As to quaternary structure, monomer. It depends on Mg(2+) as a cofactor.

The catalysed reaction is thiamine phosphate + H2O = thiamine + phosphate. In terms of biological role, HAD-like hydrolase that has a thiamine monophosphate phosphatase activity in a heterologous system. Does not contribute to thiamine monophosphate phosphatase activity in planta. This is Thiamine phosphate phosphatase-like protein from Arabidopsis thaliana (Mouse-ear cress).